The primary structure comprises 160 residues: Dihydrofolate reductase (160 aa).

The DHFR domain maps to 1-160; that stretch reads MVKAIWAMDQ…KVAYYHKIAR (160 aa). 5–7 is a substrate binding site; the sequence is IWA. NADP(+) is bound by residues 6 to 7 and 14 to 19; these read WA and IGNGNS. The substrate site is built by Glu27 and Arg32. 43–46 contributes to the NADP(+) binding site; the sequence is GSAT. Arg57 lines the substrate pocket. NADP(+)-binding positions include 62-65 and 101-106; these read LTRN and CGGAQV. Residue Ser120 participates in substrate binding.

This sequence belongs to the dihydrofolate reductase family.

It catalyses the reaction (6S)-5,6,7,8-tetrahydrofolate + NADP(+) = 7,8-dihydrofolate + NADPH + H(+). Its pathway is cofactor biosynthesis; tetrahydrofolate biosynthesis; 5,6,7,8-tetrahydrofolate from 7,8-dihydrofolate: step 1/1. In terms of biological role, key enzyme in folate metabolism. Catalyzes an essential reaction for de novo glycine and purine synthesis, and for DNA precursor synthesis. This Mycoplasma pneumoniae (strain ATCC 29342 / M129 / Subtype 1) (Mycoplasmoides pneumoniae) protein is Dihydrofolate reductase (folA).